The sequence spans 1158 residues: ATP-dependent helicase/deoxyribonuclease subunit B (1158 aa).

Belongs to the helicase family. AddB/RexB type 2 subfamily. In terms of assembly, heterodimer of AddA and RexB. Mg(2+) serves as cofactor.

Its function is as follows. The heterodimer acts as both an ATP-dependent DNA helicase and an ATP-dependent, dual-direction single-stranded exonuclease. Recognizes the chi site generating a DNA molecule suitable for the initiation of homologous recombination. This subunit has 5' -&gt; 3' nuclease activity but not helicase activity. This Lactobacillus johnsonii (strain CNCM I-12250 / La1 / NCC 533) protein is ATP-dependent helicase/deoxyribonuclease subunit B.